Reading from the N-terminus, the 261-residue chain is Phosphatidylglycerol--prolipoprotein diacylglyceryl transferase (261 aa).

4 consecutive transmembrane segments (helical) span residues 12–32 (ISIRWYAICIVTGLVLAVYLA), 41–61 (IIPDDILDFILVAFPVAIVGA), 87–107 (GIAGIAIYGGLIAGAIVLYFF), and 112–132 (LIHPVDFLDIAAPSVMIAQSI). Arg-134 contributes to the a 1,2-diacyl-sn-glycero-3-phospho-(1'-sn-glycerol) binding site. A run of 3 helical transmembrane segments spans residues 170-190 (QPTFLYESVWNLIGFILIIVL), 200-220 (GEIAAFYLIWYGFGRMIIEGM), and 229-249 (GLRVSQWLSLILIFVGIGIII).

Belongs to the Lgt family.

It is found in the cell membrane. It carries out the reaction L-cysteinyl-[prolipoprotein] + a 1,2-diacyl-sn-glycero-3-phospho-(1'-sn-glycerol) = an S-1,2-diacyl-sn-glyceryl-L-cysteinyl-[prolipoprotein] + sn-glycerol 1-phosphate + H(+). Its pathway is protein modification; lipoprotein biosynthesis (diacylglyceryl transfer). Catalyzes the transfer of the diacylglyceryl group from phosphatidylglycerol to the sulfhydryl group of the N-terminal cysteine of a prolipoprotein, the first step in the formation of mature lipoproteins. In Streptococcus sanguinis (strain SK36), this protein is Phosphatidylglycerol--prolipoprotein diacylglyceryl transferase.